The primary structure comprises 195 residues: Putative EGF-like and EMI domain-containing protein 1 (195 aa).

The region spanning 86-97 is the EGF-like domain; the sequence is CTCKSGYQGNRC.

The sequence is that of Putative EGF-like and EMI domain-containing protein 1 (EGFEM1P) from Homo sapiens (Human).